The chain runs to 116 residues: Large ribosomal subunit protein bL19 (116 aa).

Belongs to the bacterial ribosomal protein bL19 family.

Its function is as follows. This protein is located at the 30S-50S ribosomal subunit interface and may play a role in the structure and function of the aminoacyl-tRNA binding site. In Pseudomonas savastanoi pv. phaseolicola (strain 1448A / Race 6) (Pseudomonas syringae pv. phaseolicola (strain 1448A / Race 6)), this protein is Large ribosomal subunit protein bL19.